The following is a 730-amino-acid chain: Jacalin-related lectin 5 (730 aa).

The region spanning 1-126 (MSWDDGKHTK…LNSIDAHFAP (126 aa)) is the Jacalin-type lectin 1 domain. The interval 121 to 450 (DAHFAPAPPP…GNQWDDGTDH (330 aa)) is disordered. Low complexity-rich tracts occupy residues 138-153 (GASGIGSDSGSIGSAG), 168-179 (AGGSKPSSGSAG), 196-207 (AGGSKPSSGSAG), and 248-261 (TEKNAGGSKSSSGS). Positions 275-307 (ETVSNIGDTESNAGGSKSNDGANNGASGIESNA) are enriched in polar residues. The segment covering 314-323 (FGAGGTGGIG) has biased composition (gly residues). The segment covering 343-358 (DGASGIGSNDGSTGTN) has biased composition (low complexity). 2 stretches are compositionally biased toward polar residues: residues 366 to 375 (DSNIEGTENN) and 388 to 416 (IGNSDGSTGTSPEGTESNADGTKTNTGGK). Low complexity predominate over residues 417–429 (ESNTGSESNTNSS). 2 Jacalin-type lectin domains span residues 430 to 572 (PQKL…YFVP) and 584 to 727 (PNKV…YFIP).

This sequence belongs to the jacalin lectin family.

The sequence is that of Jacalin-related lectin 5 (JAL5) from Arabidopsis thaliana (Mouse-ear cress).